The sequence spans 455 residues: Probable glucarate dehydratase (455 aa).

Residues H42, T113, Y160, and K215 each coordinate substrate. The active-site Proton acceptor is K217. Mg(2+) is bound by residues D245, E276, and N299. 245–247 contacts substrate; it reads DPN. Substrate-binding positions include N299, 349–351, H378, and R431; that span reads HSN. The Proton acceptor role is filled by H349.

The protein belongs to the mandelate racemase/muconate lactonizing enzyme family. GlucD subfamily. Mg(2+) is required as a cofactor.

The catalysed reaction is D-glucarate = 5-dehydro-4-deoxy-D-glucarate + H2O. Its pathway is carbohydrate acid metabolism; D-glucarate degradation; 2,5-dioxopentanoate from D-glucarate: step 1/2. Its function is as follows. Catalyzes the dehydration of glucarate to 5-keto-4-deoxy-D-glucarate (5-kdGluc). This chain is Probable glucarate dehydratase (gudD), found in Bacillus subtilis (strain 168).